A 350-amino-acid chain; its full sequence is Protein CONSERVED ONLY IN THE GREEN LINEAGE 160, chloroplastic (350 aa).

The transit peptide at 1–46 directs the protein to the chloroplast; it reads MAILSYISATSTTPPIPQDQSPNSRLPTKIILPNKKPEKWSTGVAP. Polar residues predominate over residues 7 to 26; it reads ISATSTTPPIPQDQSPNSRL. The interval 7–58 is disordered; sequence ISATSTTPPIPQDQSPNSRLPTKIILPNKKPEKWSTGVAPGEYGGPPTTTKL. A Phosphoserine modification is found at Ser-117. 4 consecutive transmembrane segments (helical) span residues 213 to 233, 239 to 259, 276 to 296, and 304 to 324; these read KNKI…SAYI, IALS…MLGN, ANQP…RWNA, and FMHL…IATF.

Its subcellular location is the plastid. It is found in the chloroplast thylakoid membrane. Functionally, facilitates the assembly of the membrane proton channel of the chloroplastic F-type ATPase. Specifically required for the efficient assembly and integration of the CF(0) subunit c into the chloroplastic ATPase complex in the thylakoid membrane. This Arabidopsis thaliana (Mouse-ear cress) protein is Protein CONSERVED ONLY IN THE GREEN LINEAGE 160, chloroplastic.